The sequence spans 206 residues: Large ribosomal subunit protein uL4 (206 aa).

The protein belongs to the universal ribosomal protein uL4 family. As to quaternary structure, part of the 50S ribosomal subunit.

Functionally, one of the primary rRNA binding proteins, this protein initially binds near the 5'-end of the 23S rRNA. It is important during the early stages of 50S assembly. It makes multiple contacts with different domains of the 23S rRNA in the assembled 50S subunit and ribosome. In terms of biological role, forms part of the polypeptide exit tunnel. The sequence is that of Large ribosomal subunit protein uL4 from Rhodopseudomonas palustris (strain HaA2).